Reading from the N-terminus, the 92-residue chain is Non-specific lipid-transfer protein 1 (92 aa).

4 cysteine pairs are disulfide-bonded: C4-C52, C14-C28, C29-C74, and C50-C88.

Belongs to the plant LTP family. As to expression, expressed in seeds and, at very low levels, in pulp of fruit (at protein level).

In terms of biological role, plant non-specific lipid-transfer proteins transfer phospholipids as well as galactolipids across membranes. May play a role in wax or cutin deposition in the cell walls of expanding epidermal cells and certain secretory tissues. This chain is Non-specific lipid-transfer protein 1, found in Actinidia deliciosa (Kiwi).